The sequence spans 372 residues: N-methyl-L-tryptophan oxidase (372 aa).

An FAD-binding site is contributed by D4 to H34. An S-8alpha-FAD cysteine modification is found at C308.

It belongs to the MSOX/MTOX family. MTOX subfamily. Monomer. FAD is required as a cofactor.

It carries out the reaction N(alpha)-methyl-L-tryptophan + O2 + H2O = L-tryptophan + formaldehyde + H2O2. Catalyzes the oxidative demethylation of N-methyl-L-tryptophan. This is N-methyl-L-tryptophan oxidase from Escherichia coli O1:K1 / APEC.